We begin with the raw amino-acid sequence, 404 residues long: Queuine tRNA-ribosyltransferase catalytic subunit (404 aa).

The active-site Proton acceptor is Asp98. Residues 98–102 (DSGGF), Asp152, Gln195, and Gly222 contribute to the substrate site. The segment at 253-259 (GVGYAED) is RNA binding. Asp272 (nucleophile) is an active-site residue. Positions 277–281 (TRTAR) are RNA binding; important for wobble base 34 recognition. Cys310, Cys312, Cys315, and His347 together coordinate Zn(2+).

Belongs to the queuine tRNA-ribosyltransferase family. In terms of assembly, heterodimer of a catalytic subunit and an accessory subunit. Zn(2+) is required as a cofactor.

The protein resides in the cytoplasm. It is found in the nucleus. The catalysed reaction is guanosine(34) in tRNA + queuine = queuosine(34) in tRNA + guanine. Catalytic subunit of the queuine tRNA-ribosyltransferase (TGT) that catalyzes the base-exchange of a guanine (G) residue with queuine (Q) at position 34 (anticodon wobble position) in tRNAs with GU(N) anticodons (tRNA-Asp, -Asn, -His and -Tyr), resulting in the hypermodified nucleoside queuosine (7-(((4,5-cis-dihydroxy-2-cyclopenten-1-yl)amino)methyl)-7-deazaguanosine). Catalysis occurs through a double-displacement mechanism. The nucleophile active site attacks the C1' of nucleotide 34 to detach the guanine base from the RNA, forming a covalent enzyme-RNA intermediate. The proton acceptor active site deprotonates the incoming queuine, allowing a nucleophilic attack on the C1' of the ribose to form the product. This chain is Queuine tRNA-ribosyltransferase catalytic subunit, found in Schizosaccharomyces pombe (strain 972 / ATCC 24843) (Fission yeast).